Here is an 855-residue protein sequence, read N- to C-terminus: Leucine--tRNA ligase (855 aa).

The 'HIGH' region signature appears at 42–52 (PYPSGSLHVGH). A disordered region spans residues 292–311 (SEMDRTAEDKPKKGIPTGGK). A compositionally biased stretch (basic and acidic residues) spans 293 to 303 (EMDRTAEDKPK). The 'KMSKS' region motif lies at 614-618 (KMSKS). Lysine 617 serves as a coordination point for ATP.

The protein belongs to the class-I aminoacyl-tRNA synthetase family.

Its subcellular location is the cytoplasm. It catalyses the reaction tRNA(Leu) + L-leucine + ATP = L-leucyl-tRNA(Leu) + AMP + diphosphate. This chain is Leucine--tRNA ligase, found in Acaryochloris marina (strain MBIC 11017).